A 147-amino-acid polypeptide reads, in one-letter code: Lysozyme C (147 aa).

An N-terminal signal peptide occupies residues 1 to 18 (MRSLLILVLCFLPLAALG). Residues 19-147 (KVYGRCELAA…VHAWIRGCRL (129 aa)) enclose the C-type lysozyme domain. Intrachain disulfides connect cysteine 24–cysteine 145, cysteine 48–cysteine 133, cysteine 82–cysteine 98, and cysteine 94–cysteine 112.

This sequence belongs to the glycosyl hydrolase 22 family. Monomer.

Its subcellular location is the secreted. It carries out the reaction Hydrolysis of (1-&gt;4)-beta-linkages between N-acetylmuramic acid and N-acetyl-D-glucosamine residues in a peptidoglycan and between N-acetyl-D-glucosamine residues in chitodextrins.. Functionally, lysozymes have primarily a bacteriolytic function; those in tissues and body fluids are associated with the monocyte-macrophage system and enhance the activity of immunoagents. This chain is Lysozyme C (LYZ), found in Meleagris gallopavo (Wild turkey).